The chain runs to 337 residues: DNA-directed RNA polymerase subunit alpha (337 aa).

The tract at residues 1 to 233 (MIQKNWQELI…DQLSIFVNFE (233 aa)) is alpha N-terminal domain (alpha-NTD). Residues 249–337 (FNPALLKKVD…DLAKRYEDQY (89 aa)) are alpha C-terminal domain (alpha-CTD).

Belongs to the RNA polymerase alpha chain family. Homodimer. The RNAP catalytic core consists of 2 alpha, 1 beta, 1 beta' and 1 omega subunit. When a sigma factor is associated with the core the holoenzyme is formed, which can initiate transcription.

It carries out the reaction RNA(n) + a ribonucleoside 5'-triphosphate = RNA(n+1) + diphosphate. Functionally, DNA-dependent RNA polymerase catalyzes the transcription of DNA into RNA using the four ribonucleoside triphosphates as substrates. In Brucella suis (strain ATCC 23445 / NCTC 10510), this protein is DNA-directed RNA polymerase subunit alpha.